An 831-amino-acid chain; its full sequence is Leucine--tRNA ligase (831 aa).

Residues 35–45 carry the 'HIGH' region motif; sequence PYPSGKIHVGH. Positions 600 to 604 match the 'KMSKS' region motif; sequence KMSKS. Lysine 603 serves as a coordination point for ATP.

Belongs to the class-I aminoacyl-tRNA synthetase family.

It is found in the cytoplasm. It carries out the reaction tRNA(Leu) + L-leucine + ATP = L-leucyl-tRNA(Leu) + AMP + diphosphate. In Rickettsia bellii (strain RML369-C), this protein is Leucine--tRNA ligase.